The following is a 292-amino-acid chain: S-methyl-5'-thioadenosine phosphorylase (292 aa).

Residues serine 11, 53-54 (RH), and 86-87 (SA) contribute to the phosphate site. Substrate is bound at residue methionine 184. Threonine 185 lines the phosphate pocket. 208–210 (DYD) is a binding site for substrate.

It belongs to the PNP/MTAP phosphorylase family. MTAP subfamily. Homohexamer. Dimer of a homotrimer.

It catalyses the reaction S-methyl-5'-thioadenosine + phosphate = 5-(methylsulfanyl)-alpha-D-ribose 1-phosphate + adenine. It functions in the pathway amino-acid biosynthesis; L-methionine biosynthesis via salvage pathway; S-methyl-5-thio-alpha-D-ribose 1-phosphate from S-methyl-5'-thioadenosine (phosphorylase route): step 1/1. Its function is as follows. Catalyzes the reversible phosphorylation of S-methyl-5'-thioadenosine (MTA) to adenine and 5-methylthioribose-1-phosphate. Involved in the breakdown of MTA, a major by-product of polyamine biosynthesis. Responsible for the first step in the methionine salvage pathway after MTA has been generated from S-adenosylmethionine. Has broad substrate specificity with 6-aminopurine nucleosides as preferred substrates. The chain is S-methyl-5'-thioadenosine phosphorylase from Koribacter versatilis (strain Ellin345).